Reading from the N-terminus, the 154-residue chain is Decarboxylase claH (154 aa).

It belongs to the tpcK family.

The catalysed reaction is atrochrysone carboxylate + H(+) = atrochrysone + CO2. Its pathway is pigment biosynthesis. In terms of biological role, decarboxylase involved in the biosynthesis of the bianthraquinone cladofulvin, a conidial pigment not required for virulence but that plays a role in fitness and resistance to environmental stresses including UV light and low-temperature stress. The pathway begins with the synthesis of atrochrysone thioester by the polyketide synthase (PKS) claG. The atrochrysone carboxyl ACP thioesterase claF then breaks the thioester bond and releases the atrochrysone carboxylic acid from claG. This compound is decarboxylated by claH to yield emodin, which is further converted to chrysophanol hydroquinone by the reductase claC and the dehydratase claB. The cytochrome monooxygenase P450 claM then catalyzes the dimerization of nataloe-emodin to cladofulvin. In Passalora fulva (Tomato leaf mold), this protein is Decarboxylase claH.